A 213-amino-acid chain; its full sequence is PRA1 family protein B2 (213 aa).

Residues 1 to 21 (MSSSPAILPVTNQQAATQSQP) form a disordered region. A run of 5 helical transmembrane segments spans residues 75 to 94 (LAYFKVNYSAIVSLVLAFSL), 98 to 117 (PFSLLVLLSLLGSWMFLYLF), 137 to 157 (LLGLVLTTIVVVFMTSVGSLL), 161 to 181 (LTIGIAIVCLHGAFRVPDDLF), and 190 to 210 (AGLLSFIGNSAATSAAASVVA).

It belongs to the PRA1 family. Interacts with PRA1B1, PRA1B3, PRA1B4, PRA1B5, PRA1B6 and PRA1E.

It localises to the endosome membrane. Its function is as follows. May be involved in both secretory and endocytic intracellular trafficking in the endosomal/prevacuolar compartments. This chain is PRA1 family protein B2 (PRA1B2), found in Arabidopsis thaliana (Mouse-ear cress).